A 344-amino-acid polypeptide reads, in one-letter code: Anthranilate phosphoribosyltransferase (344 aa).

Residues Gly84, 87-88 (GD), Thr92, 94-97 (NIST), 112-120 (KHGNRSVSS), and Ser124 contribute to the 5-phospho-alpha-D-ribose 1-diphosphate site. Residue Gly84 participates in anthranilate binding. Ser96 is a Mg(2+) binding site. Asn115 contacts anthranilate. Residue Arg170 participates in anthranilate binding. Residues Asp229 and Glu230 each contribute to the Mg(2+) site.

This sequence belongs to the anthranilate phosphoribosyltransferase family. Homodimer. Mg(2+) serves as cofactor.

It catalyses the reaction N-(5-phospho-beta-D-ribosyl)anthranilate + diphosphate = 5-phospho-alpha-D-ribose 1-diphosphate + anthranilate. It participates in amino-acid biosynthesis; L-tryptophan biosynthesis; L-tryptophan from chorismate: step 2/5. Functionally, catalyzes the transfer of the phosphoribosyl group of 5-phosphorylribose-1-pyrophosphate (PRPP) to anthranilate to yield N-(5'-phosphoribosyl)-anthranilate (PRA). The protein is Anthranilate phosphoribosyltransferase of Xylella fastidiosa (strain 9a5c).